The chain runs to 206 residues: MEITVKTLDGIEAGSVTLSDEIFGLEPRADILHRCVTWQLSRRQAGTHRTKGRSEINRTSKKMYKQKGTGNARHGAASAPQFRGGGRAFGPVVRSHAIDLPKKVRALALKHALSSKAKAAQIIVLDKVSLDDPKTKALKEHFAKLGLESVLIVDGAQVEQNVALAARNLPYVDVLPIQGINVYDILRRDTLVLTKAAVDALEARFK.

Belongs to the universal ribosomal protein uL4 family. In terms of assembly, part of the 50S ribosomal subunit.

One of the primary rRNA binding proteins, this protein initially binds near the 5'-end of the 23S rRNA. It is important during the early stages of 50S assembly. It makes multiple contacts with different domains of the 23S rRNA in the assembled 50S subunit and ribosome. Functionally, forms part of the polypeptide exit tunnel. The sequence is that of Large ribosomal subunit protein uL4 from Xanthobacter autotrophicus (strain ATCC BAA-1158 / Py2).